A 363-amino-acid polypeptide reads, in one-letter code: 3-isopropylmalate dehydrogenase (363 aa).

78-91 (GPKWEHLPPDQQPE) is a binding site for NAD(+). Residues R99, R109, R138, and D227 each contribute to the substrate site. 3 residues coordinate Mg(2+): D227, D251, and D255. Residue 285–297 (GSAPDIAGKNIAN) coordinates NAD(+).

The protein belongs to the isocitrate and isopropylmalate dehydrogenases family. LeuB type 1 subfamily. In terms of assembly, homodimer. Mg(2+) serves as cofactor. Mn(2+) is required as a cofactor.

Its subcellular location is the cytoplasm. The catalysed reaction is (2R,3S)-3-isopropylmalate + NAD(+) = 4-methyl-2-oxopentanoate + CO2 + NADH. It participates in amino-acid biosynthesis; L-leucine biosynthesis; L-leucine from 3-methyl-2-oxobutanoate: step 3/4. Its function is as follows. Catalyzes the oxidation of 3-carboxy-2-hydroxy-4-methylpentanoate (3-isopropylmalate) to 3-carboxy-4-methyl-2-oxopentanoate. The product decarboxylates to 4-methyl-2 oxopentanoate. The chain is 3-isopropylmalate dehydrogenase from Shigella flexneri.